A 243-amino-acid chain; its full sequence is Probable transcriptional regulatory protein Ldb0677 (243 aa).

Residues 1 to 22 (MSGHSKWHNIQGRKNAQDAKRG) are disordered.

Belongs to the TACO1 family.

The protein localises to the cytoplasm. The polypeptide is Probable transcriptional regulatory protein Ldb0677 (Lactobacillus delbrueckii subsp. bulgaricus (strain ATCC 11842 / DSM 20081 / BCRC 10696 / JCM 1002 / NBRC 13953 / NCIMB 11778 / NCTC 12712 / WDCM 00102 / Lb 14)).